A 261-amino-acid polypeptide reads, in one-letter code: Glucose 1-dehydrogenase 4 (261 aa).

Valine 11–valine 35 is an NAD(+) binding site. A substrate-binding site is contributed by serine 145. The active-site Proton acceptor is the tyrosine 158.

It belongs to the short-chain dehydrogenases/reductases (SDR) family. As to quaternary structure, homotetramer.

It carries out the reaction D-glucose + NAD(+) = D-glucono-1,5-lactone + NADH + H(+). It catalyses the reaction D-glucose + NADP(+) = D-glucono-1,5-lactone + NADPH + H(+). In Priestia megaterium (Bacillus megaterium), this protein is Glucose 1-dehydrogenase 4 (gdhIV).